A 156-amino-acid polypeptide reads, in one-letter code: Ecotin (156 aa).

An N-terminal signal peptide occupies residues 1–19 (MKALLIAAGVAALSSTAMA). A disulfide bridge links Cys-65 with Cys-102.

It belongs to the protease inhibitor I11 (ecotin) family. As to quaternary structure, homodimer.

It localises to the periplasm. Its function is as follows. General inhibitor of family S1 serine proteases. The protein is Ecotin of Pseudomonas aeruginosa (strain UCBPP-PA14).